A 424-amino-acid polypeptide reads, in one-letter code: Translation initiation factor 2 subunit gamma (424 aa).

One can recognise a tr-type G domain in the interval 23-220; sequence LPEVNIGLVG…AIEETIPTPE (198 aa). Positions 32–39 are G1; it reads GHVDHGKT. Residues D35, T39, G60, and S62 each contribute to the Mg(2+) site. A GTP-binding site is contributed by 35–40; it reads DHGKTT. A G2 region spans residues 60–64; the sequence is GISIK. Positions 107–110 are G3; it reads DSPG. GTP is bound by residues 163-166 and 198-200; these read NKID and SAQ. The segment at 163–166 is G4; sequence NKID. Residues 198 to 200 are G5; it reads SAQ.

The protein belongs to the TRAFAC class translation factor GTPase superfamily. Classic translation factor GTPase family. EIF2G subfamily. As to quaternary structure, heterotrimer composed of an alpha, a beta and a gamma chain. Mg(2+) is required as a cofactor.

The enzyme catalyses GTP + H2O = GDP + phosphate + H(+). Functionally, eIF-2 functions in the early steps of protein synthesis by forming a ternary complex with GTP and initiator tRNA. The sequence is that of Translation initiation factor 2 subunit gamma from Archaeoglobus fulgidus (strain ATCC 49558 / DSM 4304 / JCM 9628 / NBRC 100126 / VC-16).